The following is a 265-amino-acid chain: Flagellar brake protein YcgR (265 aa).

The 118-residue stretch at 135–252 (QRRESYRLET…DETIQRYIFR (118 aa)) folds into the PilZ domain.

This sequence belongs to the YcgR family. In terms of assembly, monomer. Interacts with the flagellar basal bodies.

It is found in the bacterial flagellum basal body. Its function is as follows. Acts as a flagellar brake, regulating swimming and swarming in a bis-(3'-5') cyclic diguanylic acid (c-di-GMP)-dependent manner. Binds 1 c-di-GMP dimer per subunit. Increasing levels of c-di-GMP lead to decreased motility. This chain is Flagellar brake protein YcgR, found in Xanthomonas campestris pv. campestris (strain B100).